The primary structure comprises 320 residues: RNA polymerase sigma factor SigA2 (320 aa).

Positions 89 to 159 (MIEANLRLVV…TRAIAQQSRT (71 aa)) are sigma-70 factor domain-2. Residues 113-116 (DLIQ) carry the Interaction with polymerase core subunit RpoC motif. A sigma-70 factor domain-3 region spans residues 168–243 (EKLNKLKKTQ…EDEQSSPSDY (76 aa)). A sigma-70 factor domain-4 region spans residues 256-310 (LMAELTPQQQAVIALRYGLDEGDSLSLAKVGERLNISRERVRKLERQAMDHLRRR). Residues 282 to 301 (LAKVGERLNISRERVRKLER) constitute a DNA-binding region (H-T-H motif).

Belongs to the sigma-70 factor family.

It is found in the cytoplasm. In terms of biological role, sigma factors are initiation factors that promote the attachment of RNA polymerase to specific initiation sites and are then released. This sigma factor is a component of the biological clock pathway that affects the circadian expression of a subset of genes in this bacterium. This Synechococcus elongatus (strain ATCC 33912 / PCC 7942 / FACHB-805) (Anacystis nidulans R2) protein is RNA polymerase sigma factor SigA2 (sigA2).